The sequence spans 306 residues: Protein pxr1 (306 aa).

The segment covering 1-11 (MGLAAPRKRTK) has biased composition (basic residues). 2 disordered regions span residues 1–27 (MGLA…STSG) and 148–241 (AQKE…SDIP). The segment covering 15–27 (DPNNTNWSRSTSG) has biased composition (polar residues). A G-patch domain is found at 25–79 (TSGYGHKIMSSQGWTPGSFLGARNAAHADMFTAASASHIRVVVKDDTLGLGARSK). Positions 182–191 (NTLKALREEQ) are enriched in basic and acidic residues. The segment covering 219–228 (KKERKTKKRK) has biased composition (basic residues).

Belongs to the PINX1 family.

It is found in the nucleus. The protein localises to the nucleolus. Functionally, involved in rRNA-processing at A0, A1 and A2 sites and negatively regulates telomerase. In Aspergillus oryzae (strain ATCC 42149 / RIB 40) (Yellow koji mold), this protein is Protein pxr1 (pxr1).